The following is a 238-amino-acid chain: 4-hydroxy-tetrahydrodipicolinate reductase (238 aa).

Position 12–17 (12–17 (GASGRM)) interacts with NAD(+). NADP(+) is bound at residue R40. NAD(+)-binding positions include 93-95 (GTT) and 117-120 (ASNF). H149 serves as the catalytic Proton donor/acceptor. Residue H150 participates in (S)-2,3,4,5-tetrahydrodipicolinate binding. K153 (proton donor) is an active-site residue. A (S)-2,3,4,5-tetrahydrodipicolinate-binding site is contributed by 159–160 (GT).

It belongs to the DapB family.

It is found in the cytoplasm. The enzyme catalyses (S)-2,3,4,5-tetrahydrodipicolinate + NAD(+) + H2O = (2S,4S)-4-hydroxy-2,3,4,5-tetrahydrodipicolinate + NADH + H(+). The catalysed reaction is (S)-2,3,4,5-tetrahydrodipicolinate + NADP(+) + H2O = (2S,4S)-4-hydroxy-2,3,4,5-tetrahydrodipicolinate + NADPH + H(+). The protein operates within amino-acid biosynthesis; L-lysine biosynthesis via DAP pathway; (S)-tetrahydrodipicolinate from L-aspartate: step 4/4. Functionally, catalyzes the conversion of 4-hydroxy-tetrahydrodipicolinate (HTPA) to tetrahydrodipicolinate. The sequence is that of 4-hydroxy-tetrahydrodipicolinate reductase from Xanthomonas euvesicatoria pv. vesicatoria (strain 85-10) (Xanthomonas campestris pv. vesicatoria).